The sequence spans 374 residues: S-adenosylmethionine synthase 2 (374 aa).

Glutamate 11 contacts Mg(2+). Histidine 17 provides a ligand contact to ATP. Glutamate 45 serves as a coordination point for K(+). The L-methionine site is built by glutamate 58 and glutamine 101. Residues 169-171, 237-240, aspartate 248, 254-255, alanine 271, lysine 275, and lysine 279 contribute to the ATP site; these read DGK, SGRF, and RK. Aspartate 248 contacts L-methionine. Residue lysine 279 coordinates L-methionine.

This sequence belongs to the AdoMet synthase family. In terms of assembly, homotetramer. Requires Mn(2+) as cofactor. It depends on Mg(2+) as a cofactor. Co(2+) is required as a cofactor. K(+) serves as cofactor. As to expression, expressed in vegetative and reproductive tissues.

The protein resides in the cytoplasm. The catalysed reaction is L-methionine + ATP + H2O = S-adenosyl-L-methionine + phosphate + diphosphate. The protein operates within amino-acid biosynthesis; S-adenosyl-L-methionine biosynthesis; S-adenosyl-L-methionine from L-methionine: step 1/1. Catalyzes the formation of S-adenosylmethionine from methionine and ATP. The reaction comprises two steps that are both catalyzed by the same enzyme: formation of S-adenosylmethionine (AdoMet) and triphosphate, and subsequent hydrolysis of the triphosphate. This is S-adenosylmethionine synthase 2 (SAMS2) from Pisum sativum (Garden pea).